We begin with the raw amino-acid sequence, 125 residues long: MNPEYRNKKIENKIRGLISEGLQKIKVPEIDALKSYIVISRVLVSKDKRFADVFVSYIGDADSRKRAVELLEKYKGFFRKYIAQNLRIYTTPELRFKEDIGIEESIRINKLLDEISKNNKNISDK.

This sequence belongs to the RbfA family. In terms of assembly, monomer. Binds 30S ribosomal subunits, but not 50S ribosomal subunits or 70S ribosomes.

Its subcellular location is the cytoplasm. One of several proteins that assist in the late maturation steps of the functional core of the 30S ribosomal subunit. Associates with free 30S ribosomal subunits (but not with 30S subunits that are part of 70S ribosomes or polysomes). Required for efficient processing of 16S rRNA. May interact with the 5'-terminal helix region of 16S rRNA. This Thermosipho melanesiensis (strain DSM 12029 / CIP 104789 / BI429) protein is Ribosome-binding factor A.